The primary structure comprises 661 residues: Acetyl-coenzyme A synthetase (661 aa).

Residues 199–202 (RGGK) and T317 each bind CoA. ATP contacts are provided by residues 393-395 (GEP), 417-422 (DTFWQT), D508, and R523. Residue S531 participates in CoA binding. R534 contacts ATP. Position 596 (R596) interacts with CoA.

It belongs to the ATP-dependent AMP-binding enzyme family.

The enzyme catalyses acetate + ATP + CoA = acetyl-CoA + AMP + diphosphate. The protein is Acetyl-coenzyme A synthetase (ACS-1) of Coprinopsis cinerea (Inky cap fungus).